A 172-amino-acid chain; its full sequence is Peptide deformylase (172 aa).

Fe cation contacts are provided by C91 and H133. Residue E134 is part of the active site. Residue H137 participates in Fe cation binding.

It belongs to the polypeptide deformylase family. The cofactor is Fe(2+).

The enzyme catalyses N-terminal N-formyl-L-methionyl-[peptide] + H2O = N-terminal L-methionyl-[peptide] + formate. Removes the formyl group from the N-terminal Met of newly synthesized proteins. Requires at least a dipeptide for an efficient rate of reaction. N-terminal L-methionine is a prerequisite for activity but the enzyme has broad specificity at other positions. This is Peptide deformylase from Vibrio campbellii (strain ATCC BAA-1116).